Reading from the N-terminus, the 810-residue chain is Hemoglobin-haptoglobin utilization protein B (810 aa).

A signal peptide spans 1 to 22 (MPIPFKPVLAAAAIAQAFPAFA). Positions 34–166 (NEITVTGTHK…LGGAVNYQTK (133 aa)) constitute a TBDR plug domain. One can recognise a TBDR beta-barrel domain in the interval 175–810 (DKPYHLGIKG…SYNFTIEAKF (636 aa)). The short motif at 793–810 (QRFTSPGRSYNFTIEAKF) is the TonB C-terminal box element.

It belongs to the TonB-dependent receptor family.

It is found in the cell outer membrane. In terms of biological role, acts as a receptor for hemoglobin or the hemoglobin/haptoglobin complex and is required for heme uptake. The chain is Hemoglobin-haptoglobin utilization protein B (hpuB) from Neisseria meningitidis serogroup A / serotype 4A (strain DSM 15465 / Z2491).